The chain runs to 138 residues: Hexon-interlacing protein (138 aa).

A coiled-coil region spans residues 100–127; that stretch reads LLVLLAQLEALTQRLGELSKQVAQLREQ.

This sequence belongs to the adenoviridae hexon-interlacing protein family. Homotrimer. Interacts with hexon protein; this interaction tethers the hexons together. Self-interacts with adjacent proteins. Interacts with kinesin light chain KLC1; this interaction leads to capsid disruption at the nuclear pore complex during virus entry into host cell.

Its subcellular location is the virion. The protein resides in the host nucleus. In terms of biological role, structural component of the virion that acts as a cement protein on the capsid exterior and forms triskelion structures consisting of three molecules that stabilize three hexon trimers at the center of each icosahedral facet and fixes the peripentonal hexons. Dispensable for assembly. During virus entry, recruits the anterograde motor kinesin-1 to the capsid docked at the nuclear pore complex thereby subjecting the docked capsid to a pulling force. The resulting tension leads to capsid disruption, dispersion of capsid fragments toward cell periphery and eventually viral DNA entry into the host nucleus. This Human adenovirus B serotype 7 (HAdV-7) protein is Hexon-interlacing protein.